The following is a 413-amino-acid chain: Serine hydroxymethyltransferase (413 aa).

(6S)-5,6,7,8-tetrahydrofolate contacts are provided by residues leucine 115 and 119-121; that span reads GHL. An N6-(pyridoxal phosphate)lysine modification is found at lysine 224.

Belongs to the SHMT family. As to quaternary structure, homodimer. Pyridoxal 5'-phosphate serves as cofactor.

It localises to the cytoplasm. It carries out the reaction (6R)-5,10-methylene-5,6,7,8-tetrahydrofolate + glycine + H2O = (6S)-5,6,7,8-tetrahydrofolate + L-serine. It functions in the pathway one-carbon metabolism; tetrahydrofolate interconversion. The protein operates within amino-acid biosynthesis; glycine biosynthesis; glycine from L-serine: step 1/1. In terms of biological role, catalyzes the reversible interconversion of serine and glycine with tetrahydrofolate (THF) serving as the one-carbon carrier. This reaction serves as the major source of one-carbon groups required for the biosynthesis of purines, thymidylate, methionine, and other important biomolecules. Also exhibits THF-independent aldolase activity toward beta-hydroxyamino acids, producing glycine and aldehydes, via a retro-aldol mechanism. This Mycoplasma mycoides subsp. mycoides SC (strain CCUG 32753 / NCTC 10114 / PG1) protein is Serine hydroxymethyltransferase.